A 501-amino-acid polypeptide reads, in one-letter code: Aldehyde dehydrogenase, cytosolic 1 (501 aa).

Ser-2 carries the post-translational modification N-acetylserine. N6-acetyllysine occurs at positions 91 and 128. Position 246-251 (246-251 (GSTEVG)) interacts with NAD(+). Position 252 is an N6-acetyllysine (Lys-252). The active-site Proton acceptor is the Glu-269. The Nucleophile role is filled by Cys-303. Residues Lys-353, Lys-367, and Lys-410 each carry the N6-acetyllysine modification. Ser-413 carries the phosphoserine modification. Lys-419, Lys-435, and Lys-495 each carry N6-acetyllysine.

It belongs to the aldehyde dehydrogenase family. As to quaternary structure, homotetramer. As to expression, very low levels in lung and liver.

The protein resides in the cytoplasm. The enzyme catalyses an aldehyde + NAD(+) + H2O = a carboxylate + NADH + 2 H(+). It functions in the pathway alcohol metabolism; ethanol degradation; acetate from ethanol: step 2/2. Can oxidize benzaldehyde, propionaldehyde and acetaldehyde. No detectable activity with retinal. This Rattus norvegicus (Rat) protein is Aldehyde dehydrogenase, cytosolic 1 (Aldh1a7).